Reading from the N-terminus, the 396-residue chain is Elongation factor Tu (396 aa).

The tr-type G domain maps to 10–206; that stretch reads KPHCNIGTIG…AVDSYIPQPE (197 aa). Positions 19–26 are G1; the sequence is GHVDHGKT. 19–26 contacts GTP; it reads GHVDHGKT. Thr26 lines the Mg(2+) pocket. A G2 region spans residues 60–64; that stretch reads GITIS. The tract at residues 81–84 is G3; that stretch reads DCPG. GTP is bound by residues 81–85 and 136–139; these read DCPGH and NKVD. The segment at 136–139 is G4; it reads NKVD. Residues 174–176 form a G5 region; sequence SAV.

This sequence belongs to the TRAFAC class translation factor GTPase superfamily. Classic translation factor GTPase family. EF-Tu/EF-1A subfamily. As to quaternary structure, monomer.

It localises to the cytoplasm. The catalysed reaction is GTP + H2O = GDP + phosphate + H(+). GTP hydrolase that promotes the GTP-dependent binding of aminoacyl-tRNA to the A-site of ribosomes during protein biosynthesis. The polypeptide is Elongation factor Tu (Rhizorhabdus wittichii (strain DSM 6014 / CCUG 31198 / JCM 15750 / NBRC 105917 / EY 4224 / RW1) (Sphingomonas wittichii)).